The chain runs to 432 residues: Enolase (432 aa).

Residue Gln-167 coordinates (2R)-2-phosphoglycerate. Glu-209 acts as the Proton donor in catalysis. Mg(2+)-binding residues include Asp-246, Glu-287, and Asp-314. Residues Lys-339, Arg-368, Ser-369, and Lys-390 each coordinate (2R)-2-phosphoglycerate. Lys-339 functions as the Proton acceptor in the catalytic mechanism.

Belongs to the enolase family. Mg(2+) is required as a cofactor.

The protein resides in the cytoplasm. Its subcellular location is the secreted. It is found in the cell surface. The enzyme catalyses (2R)-2-phosphoglycerate = phosphoenolpyruvate + H2O. The protein operates within carbohydrate degradation; glycolysis; pyruvate from D-glyceraldehyde 3-phosphate: step 4/5. In terms of biological role, catalyzes the reversible conversion of 2-phosphoglycerate (2-PG) into phosphoenolpyruvate (PEP). It is essential for the degradation of carbohydrates via glycolysis. In Prochlorococcus marinus (strain SARG / CCMP1375 / SS120), this protein is Enolase.